The sequence spans 247 residues: MAGHSKFANIKHRKAAQDSKRGKIFTKLIREIIVATKDGGPEAENNPRLRAAVDKALSNNMTRDTINRAVKRGAGGDGEADLETVIYEGYGPAGTAVMVECMTDNRNRTVSGVRNAFSKSGGNLGTDGSVNYLFDKKGVISYAAGLDEDVMMEAALESGAEDIETNDDGSIDVYTTPSDFGAVKDALDAAGFDSVNAEVTLVPSTKADLDLETAPKLLRLIDALEDLDDVQEVYHNGEITDEIAEQL.

It belongs to the TACO1 family.

The protein resides in the cytoplasm. The protein is Probable transcriptional regulatory protein PBPRA1113 of Photobacterium profundum (strain SS9).